A 462-amino-acid chain; its full sequence is MSARLPALWKRLSSTISPRPAPPKAHHHAPIREAAFPNGYVLTGLHCGIKKTGALDLAVILSTTPKPASAAACFTRNAFKAAPVVVSEEVLQRSASTARALVVNSGCANAVTGKQGMEDAWAMVRATDALLGHSAKESETLVMSTGVIGQTLPICKVLAGIESQSSDSQTKSLGSDFTAWERAAKAFMTTDTFPKLRARTFSIDGREYKMAGMDKGAGMIHPDMGPPRMAGQLHATLLGCIMTDAAVSPRSLQSALTYAVDRSFNSISVDGDMSTNDTIVVLANGSAASDPAAEIDEERDPRTYQIFRDELTTFAADLAQLVVRDGEGATKFVTVSVNGAATYEDAHRIASRISTSALVKTALYGQDANWGRILAATGSVPLSVPIDPTRVSVSFIPTDGSPALPLLVNGEPETVDEARAKEIISVEDLEIEVQLGIGSENAKYWTCDFSYEYVRINGDYRS.

Substrate is bound by residues Thr189, Lys215, Thr236, Glu327, Asn457, and Ser462. Thr236 functions as the Nucleophile in the catalytic mechanism.

This sequence belongs to the ArgJ family. In terms of assembly, heterodimer of an alpha and a beta chain. The alpha and beta chains are autoproteolytically processed from a single precursor protein within the mitochondrion.

The protein resides in the mitochondrion matrix. It carries out the reaction N(2)-acetyl-L-ornithine + L-glutamate = N-acetyl-L-glutamate + L-ornithine. The catalysed reaction is L-glutamate + acetyl-CoA = N-acetyl-L-glutamate + CoA + H(+). The protein operates within amino-acid biosynthesis; L-arginine biosynthesis; L-ornithine and N-acetyl-L-glutamate from L-glutamate and N(2)-acetyl-L-ornithine (cyclic): step 1/1. It participates in amino-acid biosynthesis; L-arginine biosynthesis; N(2)-acetyl-L-ornithine from L-glutamate: step 1/4. Its function is as follows. Catalyzes two activities which are involved in the cyclic version of arginine biosynthesis: the synthesis of acetylglutamate from glutamate and acetyl-CoA, and of ornithine by transacetylation between acetylornithine and glutamate. The protein is Arginine biosynthesis bifunctional protein ArgJ, mitochondrial of Postia placenta (strain ATCC 44394 / Madison 698-R) (Brown rot fungus).